Consider the following 319-residue polypeptide: ATP-dependent 6-phosphofructokinase (319 aa).

Gly11 is a binding site for ATP. An ADP-binding site is contributed by 21 to 25 (RAVVR). ATP is bound by residues 72–73 (RC) and 102–105 (GDGS). Position 103 (Asp103) interacts with Mg(2+). Residue 125 to 127 (TID) coordinates substrate. Asp127 functions as the Proton acceptor in the catalytic mechanism. Arg154 provides a ligand contact to ADP. Substrate-binding positions include Arg162 and 169–171 (MGR). Residues 185-187 (GAE), Arg211, and 213-215 (KKH) each bind ADP. Residues Glu222, Arg243, and 249–252 (HIQR) contribute to the substrate site.

It belongs to the phosphofructokinase type A (PFKA) family. ATP-dependent PFK group I subfamily. Prokaryotic clade 'B1' sub-subfamily. As to quaternary structure, homotetramer. Component of a possible RNA degradosome complex composed of rny, rnjA, rnjB, pnp, pfkA and eno (although rnjA and rnjB's presence is unclear). Specifically interacts with RNase Y (rny, PubMed:21803996) and enolase (eno, PubMed:22198292). Interacts with BrxC. Mg(2+) serves as cofactor.

It is found in the cytoplasm. The enzyme catalyses beta-D-fructose 6-phosphate + ATP = beta-D-fructose 1,6-bisphosphate + ADP + H(+). It participates in carbohydrate degradation; glycolysis; D-glyceraldehyde 3-phosphate and glycerone phosphate from D-glucose: step 3/4. Its activity is regulated as follows. Allosterically activated by ADP and other diphosphonucleosides, and allosterically inhibited by phosphoenolpyruvate. Functionally, catalyzes the phosphorylation of D-fructose 6-phosphate to fructose 1,6-bisphosphate by ATP, the first committing step of glycolysis. This Bacillus subtilis (strain 168) protein is ATP-dependent 6-phosphofructokinase.